We begin with the raw amino-acid sequence, 126 residues long: H2B.U histone 2 (126 aa).

The interval 1–35 is disordered; sequence MPEPSRSTPAPKKGSKKAITKAQKKDGKKRKRGRK. An N-acetylproline modification is found at proline 2. At glutamate 3 the chain carries ADP-ribosyl glutamic acid. Serine 7 carries the ADP-ribosylserine modification. Lysine 12 carries the post-translational modification N6-(beta-hydroxybutyryl)lysine; alternate. An N6-acetyllysine; alternate mark is found at lysine 12 and lysine 13. N6-crotonyllysine; alternate is present on residues lysine 12 and lysine 13. Lysine 12 carries the N6-lactoyllysine; alternate modification. The residue at position 13 (lysine 13) is an N6-(2-hydroxyisobutyryl)lysine; alternate. Serine 15 carries the post-translational modification Phosphoserine; by STK4/MST1. Residues lysine 16, lysine 17, lysine 21, and lysine 24 each carry the N6-acetyllysine; alternate modification. Residues lysine 16, lysine 17, lysine 21, and lysine 24 each carry the N6-crotonyllysine; alternate modification. Lysine 16, lysine 17, lysine 21, and lysine 24 each carry N6-lactoyllysine; alternate. The residue at position 17 (lysine 17) is an N6-glutaryllysine; alternate. Position 21 is an N6-(beta-hydroxybutyryl)lysine; alternate (lysine 21). Lysine 21 and lysine 24 each carry N6-(2-hydroxyisobutyryl)lysine; alternate. Lysine 21 is subject to N6-butyryllysine; alternate. A Glycyl lysine isopeptide (Lys-Gly) (interchain with G-Cter in SUMO2); alternate cross-link involves residue lysine 21. An N6-(2-hydroxyisobutyryl)lysine modification is found at lysine 25. Lysine 35 is modified (N6-(beta-hydroxybutyryl)lysine; alternate). The residue at position 35 (lysine 35) is an N6-crotonyllysine; alternate. Lysine 35 carries the post-translational modification N6-(2-hydroxyisobutyryl)lysine; alternate. N6-glutaryllysine; alternate is present on lysine 35. Lysine 35 bears the N6-succinyllysine; alternate mark. Lysine 35 is covalently cross-linked (Glycyl lysine isopeptide (Lys-Gly) (interchain with G-Cter in ubiquitin); alternate). Glutamate 36 carries the post-translational modification PolyADP-ribosyl glutamic acid. At serine 37 the chain carries Phosphoserine; by AMPK. At lysine 44 the chain carries N6-lactoyllysine; alternate. Lysine 44, lysine 47, and lysine 58 each carry N6-(2-hydroxyisobutyryl)lysine; alternate. N6-glutaryllysine; alternate is present on residues lysine 44 and lysine 47. Residue lysine 47 is modified to N6-methyllysine; alternate. Lysine 58 carries the post-translational modification N6,N6-dimethyllysine; alternate. Arginine 80 bears the Dimethylated arginine mark. Lysine 86 is modified (N6-acetyllysine; alternate). N6-lactoyllysine; alternate is present on lysine 86. Lysine 86 bears the N6-(2-hydroxyisobutyryl)lysine; alternate mark. Lysine 86 carries the N6,N6,N6-trimethyllysine; alternate modification. Omega-N-methylarginine occurs at positions 87 and 93. Lysine 109 bears the N6-(beta-hydroxybutyryl)lysine; alternate mark. Lysine 109 is modified (N6-lactoyllysine; alternate). Lysine 109 is subject to N6-(2-hydroxyisobutyryl)lysine; alternate. An N6-glutaryllysine; alternate modification is found at lysine 109. An N6-methyllysine; alternate modification is found at lysine 109. O-linked (GlcNAc) serine glycosylation is present at serine 113. Threonine 116 bears the Phosphothreonine mark. Lysine 117 is modified (N6-(beta-hydroxybutyryl)lysine; alternate). An N6-lactoyllysine; alternate mark is found at lysine 117 and lysine 121. Residues lysine 117 and lysine 121 each carry the N6-(2-hydroxyisobutyryl)lysine; alternate modification. An N6-glutaryllysine; alternate mark is found at lysine 117 and lysine 121. 2 positions are modified to N6-succinyllysine; alternate: lysine 117 and lysine 121. At lysine 117 the chain carries N6-methylated lysine; alternate. Lysine 121 participates in a covalent cross-link: Glycyl lysine isopeptide (Lys-Gly) (interchain with G-Cter in ubiquitin); alternate.

The protein belongs to the histone H2B family. The nucleosome is a histone octamer containing two molecules each of H2A, H2B, H3 and H4 assembled in one H3-H4 heterotetramer and two H2A-H2B heterodimers. The octamer wraps approximately 147 bp of DNA. Monoubiquitination at Lys-35 (H2BK34Ub) by the MSL1/MSL2 dimer is required for histone H3 'Lys-4' (H3K4me) and 'Lys-79' (H3K79me) methylation and transcription activation at specific gene loci, such as HOXA9 and MEIS1 loci. Similarly, monoubiquitination at Lys-121 (H2BK120Ub) by the RNF20/40 complex gives a specific tag for epigenetic transcriptional activation and is also prerequisite for histone H3 'Lys-4' and 'Lys-79' methylation. It also functions cooperatively with the FACT dimer to stimulate elongation by RNA polymerase II. H2BK120Ub also acts as a regulator of mRNA splicing: deubiquitination by USP49 is required for efficient cotranscriptional splicing of a large set of exons. In terms of processing, phosphorylated on Ser-15 (H2BS14ph) by STK4/MST1 during apoptosis; which facilitates apoptotic chromatin condensation. Also phosphorylated on Ser-15 in response to DNA double strand breaks (DSBs), and in correlation with somatic hypermutation and immunoglobulin class-switch recombination. Phosphorylation at Ser-37 (H2BS36ph) by AMPK in response to stress promotes transcription. Post-translationally, glcNAcylation at Ser-113 promotes monoubiquitination of Lys-121. It fluctuates in response to extracellular glucose, and associates with transcribed genes. ADP-ribosylated by PARP1 or PARP2 on Ser-7 (H2BS6ADPr) in response to DNA damage. H2BS6ADPr promotes recruitment of CHD1L. Mono-ADP-ribosylated on Glu-3 (H2BE2ADPr) by PARP3 in response to single-strand breaks. Poly ADP-ribosylation on Glu-36 (H2BE35ADPr) by PARP1 regulates adipogenesis: it inhibits phosphorylation at Ser-37 (H2BS36ph), thereby blocking expression of pro-adipogenetic genes. In terms of processing, crotonylation (Kcr) is specifically present in male germ cells and marks testis-specific genes in post-meiotic cells, including X-linked genes that escape sex chromosome inactivation in haploid cells. Crotonylation marks active promoters and enhancers and confers resistance to transcriptional repressors. It is also associated with post-meiotically activated genes on autosomes. Post-translationally, hydroxybutyrylation of histones is induced by starvation. Lactylated in macrophages by EP300/P300 by using lactoyl-CoA directly derived from endogenous or exogenous lactate, leading to stimulates gene transcription.

It is found in the nucleus. It localises to the chromosome. Functionally, core component of nucleosome. Nucleosomes wrap and compact DNA into chromatin, limiting DNA accessibility to the cellular machineries which require DNA as a template. Histones thereby play a central role in transcription regulation, DNA repair, DNA replication and chromosomal stability. DNA accessibility is regulated via a complex set of post-translational modifications of histones, also called histone code, and nucleosome remodeling. The chain is H2B.U histone 2 from Mus musculus (Mouse).